Here is a 712-residue protein sequence, read N- to C-terminus: MVVKILVWSICLIALCHAWMPDSSSKLINHFKSVESKSFTGNATFPDHFIVLNQDETSILVGGRNRVYNLSIFDLSERKGGRIDWPSSDAHGQLCILKGKTDDDCQNYIRILYSSEPGKLVICGTNSYKPLCRTYAFKEGKYLVEKEVEGIGLCPYNPEHNSTSVSYNGQLFSATVADFSGGDPLIYREPQRTELSDLKQLNAPNFVNSVAYGDYIFFFYRETAVEYMNCGKVIYSRVARVCKDDKGGPHQSRDRWTSFLKARLNCSIPGEYPFYFDEIQSTSDIVEGRYNSDDSKKIIYGILTTPVNAIGGSAICAYQMADILRVFEGSFKHQETINSNWLPVPQNLVPEPRPGQCVRDSRILPDKNVNFIKTHSLMEDVPALFGKPVLVRVSLQYRFTAITVDPQVKTINNQYLDVLYIGTDDGKVLKAVNIPKRHAKALLYRKYRTSVHPHGAPVKQLKIAPGYGKVVVVGKDEIRLANLNHCASKTRCKDCVELQDPHCAWDAKQNLCVSIDTVTSYRFLIQDVVRGDDNKCWSPQTDKKTVIKNKPSEVENEITNSIDEKDLDSSDPLIKTGLDDDSDCDPVSENSIGGCAVRQQLVIYTAGTLHIVVVVVSIVGLFSWLYSGLSVFAKFHSDSQYPEAPFIEQHNHLERLSANQTGYLTPRANKAVNLVVKVSSSTPRPKKDNLDVSKDLNIASDGTLQKIKKTYI.

The first 20 residues, methionine 1–methionine 20, serve as a signal peptide directing secretion. Residues proline 21–leucine 483 form the Sema domain. The Extracellular portion of the chain corresponds to proline 21 to leucine 601. N-linked (GlcNAc...) asparagine glycosylation is found at asparagine 42 and asparagine 69. 2 disulfide bridges follow: cysteine 95–cysteine 105 and cysteine 123–cysteine 132. N-linked (GlcNAc...) asparagine glycans are attached at residues asparagine 161 and asparagine 265. 4 disulfides stabilise this stretch: cysteine 242-cysteine 357, cysteine 266-cysteine 316, cysteine 486-cysteine 503, and cysteine 495-cysteine 512. The chain crosses the membrane as a helical span at residues valine 602–phenylalanine 622. Topologically, residues serine 623–isoleucine 712 are cytoplasmic.

This sequence belongs to the semaphorin family.

It localises to the membrane. Functionally, plays a role in growth cones guidance. This is Semaphorin-1A (SEMA-1A) from Tribolium confusum (Confused flour beetle).